We begin with the raw amino-acid sequence, 163 residues long: Probable metallophosphoesterase MG207 (163 aa).

Aspartate 9, histidine 11, aspartate 34, asparagine 53, histidine 75, histidine 107, and histidine 109 together coordinate Mn(2+).

The protein belongs to the metallophosphoesterase superfamily. YfcE family. Requires Mn(2+) as cofactor.

This chain is Probable metallophosphoesterase MG207, found in Mycoplasma genitalium (strain ATCC 33530 / DSM 19775 / NCTC 10195 / G37) (Mycoplasmoides genitalium).